The sequence spans 1050 residues: Integrin alpha-5 (1050 aa).

Positions 1-32 (MQLPRGSRVPGLVATFLFPVLCALLTFSSVRG) are cleaved as a signal peptide. Over 33-996 (FNLAVEQPAV…IHWAKPESSY (964 aa)) the chain is Extracellular. FG-GAP repeat units lie at residues 34 to 99 (NLAV…GTNC), 116 to 175 (DTPQ…NFTT), 183 to 235 (RTDF…QEAY), 249 to 301 (QTRQ…GTDL), 302 to 367 (RSLY…MEST), 368 to 426 (PHLI…GVDS), and 430 to 493 (QVLQ…ISPN). Residues N75, N95, and N98 are each glycosylated (N-linked (GlcNAc...) asparagine). Disulfide bonds link C90–C99 and C145–C166. N-linked (GlcNAc...) asparagine glycosylation is present at N172. A disulfide bond links C182 and C195. Residues E270, S272, D274, T276, and D278 each coordinate Ca(2+). N-linked (GlcNAc...) asparagine glycosylation is found at N287, N297, and N306. Residues D324, N326, D328, L330, D332, D390, D392, D394, D398, D454, D456, N458, Y460, and D462 each coordinate Ca(2+). Cysteines 502 and 513 form a disulfide. N-linked (GlcNAc...) asparagine glycosylation is found at N507, N515, N521, and N600. C519 and C575 are disulfide-bonded. An intrachain disulfide couples C636 to C642. 4 N-linked (GlcNAc...) asparagine glycosylation sites follow: N649, N714, N763, and N861. C708 and C721 are joined by a disulfide. 3 cysteine pairs are disulfide-bonded: C839/C958, C862/C922, and C910/C917. Residues 997 to 1022 (GVPLWIIILAILIGLLLLALLIYVLY) traverse the membrane as a helical segment. Residues 1023–1050 (KLGFFKRSYQYGTAMEKAELKPQAASEA) lie on the Cytoplasmic side of the membrane. The short motif at 1025 to 1029 (GFFKR) is the GFFKR motif element.

It belongs to the integrin alpha chain family. In terms of assembly, heterodimer of an alpha and a beta subunit. The alpha subunit is composed of a heavy and a light chain linked by a disulfide bond. Alpha-5 associates with beta-1.

The protein localises to the cell membrane. It localises to the cell junction. Its subcellular location is the focal adhesion. Integrin alpha-5/beta-1 (ITGA5:ITGB1) is a receptor for fibronectin. It recognizes the sequence R-G-D in its ligands. ITGA5:ITGB1 acts as a receptor for fibrillin-1 (FBN1) and mediates R-G-D-dependent cell adhesion to FBN1. ITGA5:ITGB1 acts as a receptor for fibronectin (FN1) and mediates R-G-D-dependent cell adhesion to FN1. ITGA5:ITGB1 is a receptor for IL1B and binding is essential for IL1B signaling. ITGA5:ITGB3 is a receptor for soluble CD40LG and is required for CD40/CD40LG signaling. The sequence is that of Integrin alpha-5 (itga5) from Xenopus laevis (African clawed frog).